The sequence spans 200 residues: Phospholipase A2 inhibitor NAI (200 aa).

Residues 1 to 19 (MKSLLFCCLFGTFLATGMC) form the signal peptide. 8 disulfide bridges follow: C22–C46, C25–C32, C39–C67, C73–C94, C95–C100, C120–C145, C138–C165, and C171–C191.

This sequence belongs to the CNF-like-inhibitor family. In terms of assembly, heterotrimer of 2 subunits A and 1 subunit B; non-covalently linked. As to expression, expressed by the liver.

The protein resides in the secreted. Functionally, inhibits the enzymatic activity of all phospholipase A2 tested, binding with micromole to nanomole affinity. In Notechis ater (Black tiger snake), this protein is Phospholipase A2 inhibitor NAI.